The sequence spans 420 residues: MCCFLLVSVLLATTLTDVASAQRWRQTSGGGKDRWDGLLDPLDADLRRDIIRYGELAQATSDALIGDPASPFAGASRYAPDAFLRKVRASDPDAYRVTRFVYATSSVRLPDAFMPRPAPSAGAAWSGESNWMGYVAVAADGVAANAGRRDIVVAWRGTKRAVEWANDLDITLVPADGVVGPGPGWTQPSVHRGFLSVYTSKSFSSPFNKLSAREQVLAEITRLLRAYKNENCSITITGHSLGAALSTLNAIDIVANGYNVRGSSRVPVPVTAIALASPRVGDDQFKRAFDSTPNLSLLRVRNAPDIVPTILPSAFFKDVGAELLVDTRRSPYLKNPAGPAQWHNLECYLHAVAGTQGAGDGAGFSLVVDRDLALVNKEVDALRDEYQVPAAWWVEKNKGMVQNASGRWVLQDHEEGNLAM.

A signal peptide spans 1-21 (MCCFLLVSVLLATTLTDVASA). Residue asparagine 231 is glycosylated (N-linked (GlcNAc...) asparagine). Residue serine 240 is the Acyl-ester intermediate of the active site. Serine 240 serves as the catalytic Charge relay system. Asparagine 294 is a glycosylation site (N-linked (GlcNAc...) asparagine). Active-site charge relay system residues include aspartate 305 and histidine 343. Residues 367–388 (VVDRDLALVNKEVDALRDEYQV) adopt a coiled-coil conformation. A glycan (N-linked (GlcNAc...) asparagine) is linked at asparagine 403.

It belongs to the AB hydrolase superfamily. Lipase family.

The protein localises to the secreted. Its function is as follows. Acylhydrolase that catalyzes the hydrolysis of phospholipids at the sn-1 position. The sequence is that of Phospholipase A1-II 3 from Oryza sativa subsp. indica (Rice).